A 523-amino-acid polypeptide reads, in one-letter code: Amino acid transporter protein 6 (523 aa).

Topologically, residues 1–19 are cytoplasmic; sequence MLNVFGVSASMPDDSRSQK. Residues 20 to 40 traverse the membrane as a helical segment; sequence MGLLGAISYIVGNIVGSGIFI. Topologically, residues 41–51 are extracellular; it reads TPTSIIENVNS. Residues 52–72 form a helical membrane-spanning segment; it reads VGLSLAIWILAAFISMLGSFC. The Cytoplasmic portion of the chain corresponds to 73 to 86; it reads YVELGTSIRLSGGD. Residues 87-107 form a helical membrane-spanning segment; sequence FAYLCFMKWYPVAFAFMCIGC. The Extracellular segment spans residues 108 to 145; the sequence is TINYPATLAVQAQTFAEYVFRGAGVELDETSEFWAKKL. The chain crosses the membrane as a helical span at residues 146–166; that stretch reads LGFSLIILLMFMNFFSLKTFV. Residues 167-173 lie on the Cytoplasmic side of the membrane; that stretch reads QRFSILA. A helical membrane pass occupies residues 174–194; that stretch reads SLAKIAATLLIIITGFYYLIF. At 195–214 the chain is on the extracellular side; that stretch reads KHWKQNLEEPFKGSNWNPGP. The chain crosses the membrane as a helical span at residues 215–235; sequence FVNALFAGLFSYDGWDILNFG. Residues 236-249 lie on the Cytoplasmic side of the membrane; sequence AEEIENPKRTMPLS. A helical membrane pass occupies residues 250–270; it reads IIIGMTCIGVIYVAVNVAYSI. The Extracellular segment spans residues 271–290; the sequence is VLSPTEMIASNAVAIDFANK. Asparagine 289 carries N-linked (GlcNAc...) asparagine glycosylation. Residues 291–311 traverse the membrane as a helical segment; it reads TLGAAAFVVPVMVAILLIGSL. Residues 312–348 lie on the Cytoplasmic side of the membrane; that stretch reads NSTMFSASRYLQAVSRQGHIPSAISGIAPNCDSPRVA. Residues 349–369 form a helical membrane-spanning segment; that stretch reads LLVHILIAIAVSFLGDPDKLI. Over 370–404 the chain is Extracellular; that stretch reads NYVAFAQWSQRAFTMSALLYLRIRGRPRHPDRIQL. Residues 405 to 425 form a helical membrane-spanning segment; it reads PIIMPILFFLVCTSMVVISII. At 426–429 the chain is on the cytoplasmic side; sequence DDFK. The helical transmembrane segment at 430 to 450 threads the bilayer; sequence SSAVGLGILLGGLIIFIIFVW. The Extracellular portion of the chain corresponds to 451 to 523; it reads DRALPSSHTF…GNGQFKCTRM (73 aa). An N-linked (GlcNAc...) asparagine glycan is attached at asparagine 462. Residues 521–523 carry the PDZ-binding motif motif; sequence TRM.

It belongs to the amino acid-polyamine-organocation (APC) superfamily. In terms of assembly, interacts (via PDZ-binding motif) with nfrl-1 (via PDZ 2 domain); the interaction with nrfl-1 is required to sequester aat-6 to the apical cell membrane of intestinal cells. Expressed at the apical cell membrane of intestinal cells.

The protein localises to the apical cell membrane. In terms of biological role, amino acid transporter that mediates the uptake of the L-enantiomers of various amino acids, including L-glutamate. May play a role in promoting fertility. The sequence is that of Amino acid transporter protein 6 from Caenorhabditis elegans.